Reading from the N-terminus, the 94-residue chain is Small ribosomal subunit protein bS20 (94 aa).

Belongs to the bacterial ribosomal protein bS20 family.

Functionally, binds directly to 16S ribosomal RNA. The protein is Small ribosomal subunit protein bS20 of Symbiobacterium thermophilum (strain DSM 24528 / JCM 14929 / IAM 14863 / T).